The primary structure comprises 350 residues: MFEISLSDPVELRDADDAALLAAIEDCARAEVAAGARRLSAIAELTSRRTGNDQRADWACDGWDCAAAEVAAALTVSHRKASGQMHLSLTLNRLPQVAALFLAGQLSARLVSIIAWRTYLVRDPEALSLLDAALAKHATAWGPLSAPKLEKAIDSWIDRYDPAALRRTRISARSRDLCIGDPDEDAGTAALWGRLFATDAAMLDKRLTQLAHGVCDDDPRTIAQRRADALGALAAGADRLTCGCGNSDCPSSAGNHRQATGVVIHVVADAAALGAAPDPRLSGPEPALAPEAPATPAVKPPAALISGGGVVPAPLLAELIRGGAALSRVRHPGDLRSEPHYRPSAKLAEF.

The segment at 330-350 (RHPGDLRSEPHYRPSAKLAEF) is disordered. Residues 331–341 (HPGDLRSEPHY) are compositionally biased toward basic and acidic residues.

This is an uncharacterized protein from Mycobacterium tuberculosis.